The chain runs to 170 residues: Cathelicidin antimicrobial peptide (170 aa).

Positions 1 to 30 are cleaved as a signal peptide; that stretch reads MKTQRDGPSLGRWSLVLLLLGLTMPLAVIA. The propeptide at 31 to 131 is cathelin-like domain (CLD); the sequence is RVLSYQEAVL…DISCDKDKRK (101 aa). 2 disulfide bridges follow: Cys86-Cys97 and Cys108-Cys125. The tract at residues 150–162 is active core; it reads LKNIGQRIKDFFG.

The protein belongs to the cathelicidin family. In terms of assembly, monomer, homodimer or homotrimer (in vitro). Oligomerizes as tetra- or hexamer in solution (in vitro). In terms of processing, proteolytically cleaved by proteinase PRTN3 into antibacterial peptide LL-37. Proteolytically cleaved by cathepsin CTSG and neutrophil elastase ELANE. Post-translationally, resistant to proteolytic degradation in solution, and when bound to both zwitterionic (mimicking mammalian membranes) and negatively charged membranes (mimicking bacterial membranes). After secretion onto the skin surface, the CAMP gene product is processed by a serine protease-dependent mechanism into multiple novel antimicrobial peptides distinct from and shorter than cathelicidin LL-37. These peptides show enhanced antimicrobial action, acquiring the ability to kill skin pathogens such as S.aureus, E.coli and C.albicans. These peptides have lost the ability to stimulate CXCL8/IL8 release from keratinocytes. The peptides act synergistically, killing bacteria at lower concentrations when present together, and maintain activity at increased salt condition.

The protein resides in the secreted. It is found in the vesicle. Functionally, antimicrobial protein that is an integral component of the innate immune system. Binds to bacterial lipopolysaccharides (LPS). Acts via neutrophil N-formyl peptide receptors to enhance the release of CXCL2. Postsecretory processing generates multiple cathelicidin antimicrobial peptides with various lengths which act as a topical antimicrobial defense in sweat on skin. The unprocessed precursor form, cathelicidin antimicrobial peptide, inhibits the growth of Gram-negative E.coli and E.aerogenes with efficiencies comparable to that of the mature peptide LL-37 (in vitro). In terms of biological role, antimicrobial peptide that is an integral component of the innate immune system. Binds to bacterial lipopolysaccharides (LPS). Causes membrane permeabilization by forming transmembrane pores (in vitro). Causes lysis of E.coli. Exhibits antimicrobial activity against Gram-negative bacteria such as P.aeruginosa, S.typhimurium, E.aerogenes, E.coli and P.syringae, Gram-positive bacteria such as L.monocytogenes, S.epidermidis, S.pyogenes and S.aureus, as well as vancomycin-resistant enterococci (in vitro). Exhibits antimicrobial activity against methicillin-resistant S.aureus, P.mirabilis, and C.albicans in low-salt media, but not in media containing 100 mM NaCl (in vitro). Forms chiral supramolecular assemblies with quinolone signal (PQS) molecules of P.aeruginosa, which may lead to interference of bacterial quorum signaling and perturbance of bacterial biofilm formation. May form supramolecular fiber-like assemblies on bacterial membranes. Induces cytokine and chemokine producation as well as TNF/TNFA and CSF2/GMCSF production in normal human keratinocytes. Exhibits hemolytic activity against red blood cells. Exhibits antimicrobial activity against E.coli and B.megaterium (in vitro). The polypeptide is Cathelicidin antimicrobial peptide (Ateles fusciceps robustus (Colombian black-faced spider monkey)).